The chain runs to 121 residues: T cell receptor alpha variable 23/delta variable 6 (121 aa).

Positions 1–21 are cleaved as a signal peptide; it reads MDKILGASFLVLWLQLCWVSG. In terms of domain architecture, Ig-like spans 30 to 121; it reads QQVKQSPQSL…DSATYFCAAS (92 aa). Cysteines 51 and 118 form a disulfide. Asparagine 95 carries N-linked (GlcNAc...) asparagine glycosylation.

As to quaternary structure, alpha-beta TR is a heterodimer composed of an alpha and beta chain; disulfide-linked. The alpha-beta TR is associated with the transmembrane signaling CD3 coreceptor proteins to form the TR-CD3 (TcR or TCR). The assembly of alpha-beta TR heterodimers with CD3 occurs in the endoplasmic reticulum where a single alpha-beta TR heterodimer associates with one CD3D-CD3E heterodimer, one CD3G-CD3E heterodimer and one CD247 homodimer forming a stable octameric structure. CD3D-CD3E and CD3G-CD3E heterodimers preferentially associate with TR alpha and TR beta chains, respectively. The association of the CD247 homodimer is the last step of TcR assembly in the endoplasmic reticulum and is required for transport to the cell surface.

It localises to the cell membrane. In terms of biological role, v region of the variable domain of T cell receptor (TR) alpha chain that participates in the antigen recognition. Alpha-beta T cell receptors are antigen specific receptors which are essential to the immune response and are present on the cell surface of T lymphocytes. Recognize peptide-major histocompatibility (MH) (pMH) complexes that are displayed by antigen presenting cells (APC), a prerequisite for efficient T cell adaptive immunity against pathogens. Binding of alpha-beta TR to pMH complex initiates TR-CD3 clustering on the cell surface and intracellular activation of LCK that phosphorylates the ITAM motifs of CD3G, CD3D, CD3E and CD247 enabling the recruitment of ZAP70. In turn ZAP70 phosphorylates LAT, which recruits numerous signaling molecules to form the LAT signalosome. The LAT signalosome propagates signal branching to three major signaling pathways, the calcium, the mitogen-activated protein kinase (MAPK) kinase and the nuclear factor NF-kappa-B (NF-kB) pathways, leading to the mobilization of transcription factors that are critical for gene expression and essential for T cell growth and differentiation. The T cell repertoire is generated in the thymus, by V-(D)-J rearrangement. This repertoire is then shaped by intrathymic selection events to generate a peripheral T cell pool of self-MH restricted, non-autoaggressive T cells. Post-thymic interaction of alpha-beta TR with the pMH complexes shapes TR structural and functional avidity. The polypeptide is T cell receptor alpha variable 23/delta variable 6 (Homo sapiens (Human)).